The sequence spans 311 residues: Ribonuclease HIII (311 aa).

The region spanning 95-311 is the RNase H type-2 domain; sequence MSIVGSDEVG…NTEKAFRLLK (217 aa). Asp-101, Glu-102, and Asp-206 together coordinate a divalent metal cation.

Belongs to the RNase HII family. RnhC subfamily. Mn(2+) is required as a cofactor. It depends on Mg(2+) as a cofactor.

It is found in the cytoplasm. It catalyses the reaction Endonucleolytic cleavage to 5'-phosphomonoester.. In terms of biological role, endonuclease that specifically degrades the RNA of RNA-DNA hybrids. In Bacillus thuringiensis subsp. konkukian (strain 97-27), this protein is Ribonuclease HIII.